We begin with the raw amino-acid sequence, 99 residues long: Plastocyanin (99 aa).

Positions 1–99 (IEVLLGGDDG…AGMVGKVTVN (99 aa)) constitute a Plastocyanin-like domain. 4 residues coordinate Cu cation: histidine 37, cysteine 84, histidine 87, and methionine 92.

Belongs to the plastocyanin family. Cu(2+) is required as a cofactor.

It localises to the plastid. It is found in the chloroplast thylakoid membrane. In terms of biological role, participates in electron transfer between P700 and the cytochrome b6-f complex in photosystem I. The protein is Plastocyanin (PETE) of Cucurbita pepo (Vegetable marrow).